The primary structure comprises 131 residues: Probable ATP synthase subunit g 2, mitochondrial (131 aa).

It belongs to the ATPase g subunit family. Subunit of the F-type ATPase which has 2 components, CF(1) - the catalytic core - and CF(0) - the membrane proton channel.

It localises to the mitochondrion membrane. Functionally, mitochondrial membrane ATP synthase (F(1)F(0) ATP synthase or Complex V) produces ATP from ADP in the presence of a proton gradient across the membrane which is generated by electron transport complexes of the respiratory chain. F-type ATPases consist of two structural domains, F(1) - containing the extramembraneous catalytic core, and F(0) - containing the membrane proton channel, linked together by a central stalk and a peripheral stalk. During catalysis, ATP synthesis in the catalytic domain of F(1) is coupled via a rotary mechanism of the central stalk subunits to proton translocation. Part of the complex F(0) domain. Minor subunit located with subunit a in the membrane. This is Probable ATP synthase subunit g 2, mitochondrial from Caenorhabditis elegans.